A 122-amino-acid chain; its full sequence is Large ribosomal subunit protein uL14c (122 aa).

This sequence belongs to the universal ribosomal protein uL14 family. In terms of assembly, part of the 50S ribosomal subunit.

It is found in the plastid. It localises to the chloroplast. Functionally, binds to 23S rRNA. The sequence is that of Large ribosomal subunit protein uL14c from Eucalyptus globulus subsp. globulus (Tasmanian blue gum).